A 325-amino-acid polypeptide reads, in one-letter code: MIARIWSGESPLWRLLLPLSWLYGLVSGAIRLSYKLGLKRAWRAPVPVVVVGNLTAGGNGKTPVVIWLVEKLQQRGVRVGVVSRGYGGKAAAYPLLLTPETTTAEAGDEPVLIYQRTGAPVAVAPERAAAVKAILAAHNVQIIITDDGLQHYRLARDIEIVVIDGVRRFGNGWWLPAGPMRERASRLKTVDAAIVNGGVARAGEIPMQLAPGLAVNLRTGARCDVAQLSNIVAMAGIGHPPRFFATLEACGAHPQKCVPLADHQTLAPADVQALVGEGQTLVMTEKDAVKCRAFAEDNWWFLPVDAHLSGEQPDKLLQHITSLVR.

An ATP-binding site is contributed by 55 to 62; sequence TAGGNGKT.

The protein belongs to the LpxK family.

It carries out the reaction a lipid A disaccharide + ATP = a lipid IVA + ADP + H(+). Its pathway is glycolipid biosynthesis; lipid IV(A) biosynthesis; lipid IV(A) from (3R)-3-hydroxytetradecanoyl-[acyl-carrier-protein] and UDP-N-acetyl-alpha-D-glucosamine: step 6/6. Transfers the gamma-phosphate of ATP to the 4'-position of a tetraacyldisaccharide 1-phosphate intermediate (termed DS-1-P) to form tetraacyldisaccharide 1,4'-bis-phosphate (lipid IVA). This Salmonella agona (strain SL483) protein is Tetraacyldisaccharide 4'-kinase.